Here is an 867-residue protein sequence, read N- to C-terminus: G-protein coupled receptor family C group 6 member A (867 aa).

A signal peptide spans 1-19; that stretch reads MDLMSFILLWAGLMKVAEA. The Extracellular segment spans residues 20-566; it reads SIAQFSQLGA…EYFDWNSGFA (547 aa). Residues Asn51, Asn55, Asn97, Asn296, Asn308, Asn336, Asn356, Asn370, Asn527, and Asn547 are each glycosylated (N-linked (GlcNAc...) asparagine). The chain crosses the membrane as a helical span at residues 567–587; that stretch reads IVLLILAALGVLLLFFMSALF. Residues 588–602 lie on the Cytoplasmic side of the membrane; sequence FWQRHSPVVKAAGGP. Residues 603–623 traverse the membrane as a helical segment; sequence LCHLILVSLLGSFISVVFFVG. The Extracellular segment spans residues 624-634; it reads EPSDLTCRARQ. Residues 635 to 655 traverse the membrane as a helical segment; sequence VIFGFSFTLCVSCILVKSLKI. Residues 656–675 lie on the Cytoplasmic side of the membrane; the sequence is LLAFEMNFELKELLCMLYKP. A helical membrane pass occupies residues 676–696; that stretch reads YMIVSVGMGVQIIICTVWLTL. Residues 697 to 716 lie on the Extracellular side of the membrane; the sequence is YKPFKDKEVQTESILLECNE. A helical membrane pass occupies residues 717–737; the sequence is GFYVMFWLMLGYIALLALFCF. Topologically, residues 738-754 are cytoplasmic; the sequence is TFAYIGRKLPQKYNEAK. The helical transmembrane segment at 755-775 threads the bilayer; the sequence is FITFSMVICLMAWIIFIPIHV. The Extracellular portion of the chain corresponds to 776–781; that stretch reads TTSGKY. The helical transmembrane segment at 782-802 threads the bilayer; it reads VPAVEMVVILISNYGILSCHF. Residues 803-867 lie on the Cytoplasmic side of the membrane; sequence LPKSYIILFK…LSFVPEEKHE (65 aa).

It belongs to the G-protein coupled receptor 3 family. Homodimer; disulfide-linked.

It localises to the cell membrane. In terms of biological role, olfactory receptor that is activated by amino acids that act as potent odorants in fish. Displays preference for acidic amino acids such as Glu over basic amino acids. The chain is G-protein coupled receptor family C group 6 member A (gprc6a) from Danio rerio (Zebrafish).